The sequence spans 208 residues: Uracil phosphoribosyltransferase (208 aa).

Residues Arg-78, Arg-103, and 130-138 (DPMLATGGS) each bind 5-phospho-alpha-D-ribose 1-diphosphate. Uracil contacts are provided by residues Ile-193 and 198 to 200 (GDA). Residue Asp-199 participates in 5-phospho-alpha-D-ribose 1-diphosphate binding.

Belongs to the UPRTase family. Requires Mg(2+) as cofactor.

It catalyses the reaction UMP + diphosphate = 5-phospho-alpha-D-ribose 1-diphosphate + uracil. It functions in the pathway pyrimidine metabolism; UMP biosynthesis via salvage pathway; UMP from uracil: step 1/1. Allosterically activated by GTP. Its function is as follows. Catalyzes the conversion of uracil and 5-phospho-alpha-D-ribose 1-diphosphate (PRPP) to UMP and diphosphate. This chain is Uracil phosphoribosyltransferase, found in Shewanella piezotolerans (strain WP3 / JCM 13877).